Reading from the N-terminus, the 397-residue chain is Polygalacturonase (397 aa).

Positions 1–22 are cleaved as a signal peptide; that stretch reads MGSYLGIYTILVLCLLGYSANA. PbH1 repeat units lie at residues 169 to 195, 196 to 217, 219 to 239, and 249 to 270; these read GKNM…HLGR, CEGV…SVGD, MKNL…SVGS, and VTDI…RIKT. The N-linked (GlcNAc...) asparagine glycan is linked to Asn-171. The Proton donor role is filled by Asp-210. A disulfide bridge connects residues Cys-212 and Cys-229. Residue His-233 is part of the active site. An N-linked (GlcNAc...) asparagine glycan is attached at Asn-256. 2 disulfides stabilise this stretch: Cys-341–Cys-347 and Cys-370–Cys-386.

This sequence belongs to the glycosyl hydrolase 28 family. Pollen.

It is found in the secreted. The protein localises to the cell wall. It carries out the reaction (1,4-alpha-D-galacturonosyl)n+m + H2O = (1,4-alpha-D-galacturonosyl)n + (1,4-alpha-D-galacturonosyl)m.. Its function is as follows. May function in depolymerizing pectin during pollen development, germination, and tube growth. This chain is Polygalacturonase, found in Brassica napus (Rape).